The primary structure comprises 146 residues: 3-dehydroquinate dehydratase (146 aa).

Tyr-22 functions as the Proton acceptor in the catalytic mechanism. Asn-74, His-80, and Asp-87 together coordinate substrate. His-100 serves as the catalytic Proton donor. Substrate is bound by residues 101–102 (LS) and Arg-111.

It belongs to the type-II 3-dehydroquinase family. In terms of assembly, homododecamer.

The enzyme catalyses 3-dehydroquinate = 3-dehydroshikimate + H2O. It functions in the pathway metabolic intermediate biosynthesis; chorismate biosynthesis; chorismate from D-erythrose 4-phosphate and phosphoenolpyruvate: step 3/7. Functionally, catalyzes a trans-dehydration via an enolate intermediate. In Clostridium perfringens (strain SM101 / Type A), this protein is 3-dehydroquinate dehydratase.